Reading from the N-terminus, the 391-residue chain is 8-amino-7-oxononanoate synthase (391 aa).

Arginine 19 provides a ligand contact to substrate. 106-107 provides a ligand contact to pyridoxal 5'-phosphate; sequence GY. Histidine 131 contacts substrate. Positions 178, 206, and 234 each coordinate pyridoxal 5'-phosphate. N6-(pyridoxal phosphate)lysine is present on lysine 237. Residue threonine 353 participates in substrate binding.

The protein belongs to the class-II pyridoxal-phosphate-dependent aminotransferase family. BioF subfamily. As to quaternary structure, homodimer. Requires pyridoxal 5'-phosphate as cofactor.

The enzyme catalyses 6-carboxyhexanoyl-[ACP] + L-alanine + H(+) = (8S)-8-amino-7-oxononanoate + holo-[ACP] + CO2. Its pathway is cofactor biosynthesis; biotin biosynthesis. Functionally, catalyzes the decarboxylative condensation of pimeloyl-[acyl-carrier protein] and L-alanine to produce 8-amino-7-oxononanoate (AON), [acyl-carrier protein], and carbon dioxide. This Geobacter metallireducens (strain ATCC 53774 / DSM 7210 / GS-15) protein is 8-amino-7-oxononanoate synthase.